We begin with the raw amino-acid sequence, 648 residues long: Chaperone protein HtpG (648 aa).

The tract at residues 1 to 353 (MNARVEQLEF…AQDMSLNVSR (353 aa)) is a; substrate-binding. The tract at residues 354–567 (EILQQDRQIK…TFGITPALAR (214 aa)) is b. The tract at residues 568–648 (IYRATGQDVP…LLADRLTRTL (81 aa)) is c.

The protein belongs to the heat shock protein 90 family. As to quaternary structure, homodimer.

The protein resides in the cytoplasm. Its function is as follows. Molecular chaperone. Has ATPase activity. In Mycobacterium ulcerans (strain Agy99), this protein is Chaperone protein HtpG.